Here is a 154-residue protein sequence, read N- to C-terminus: Decarboxylase claH (154 aa).

Belongs to the tpcK family.

It catalyses the reaction atrochrysone carboxylate + H(+) = atrochrysone + CO2. The protein operates within pigment biosynthesis. Functionally, decarboxylase involved in the biosynthesis of the bianthraquinone cladofulvin, a conidial pigment not required for virulence but that plays a role in fitness and resistance to environmental stresses including UV light and low-temperature stress. The pathway begins with the synthesis of atrochrysone thioester by the polyketide synthase (PKS) claG. The atrochrysone carboxyl ACP thioesterase claF then breaks the thioester bond and releases the atrochrysone carboxylic acid from claG. This compound is decarboxylated by claH to yield emodin, which is further converted to chrysophanol hydroquinone by the reductase claC and the dehydratase claB. The cytochrome monooxygenase P450 claM then catalyzes the dimerization of nataloe-emodin to cladofulvin. The sequence is that of Decarboxylase claH from Passalora fulva (Tomato leaf mold).